A 234-amino-acid chain; its full sequence is Uridylate kinase (234 aa).

9–12 (KLSG) is an ATP binding site. Gly-51 lines the UMP pocket. ATP-binding residues include Gly-52 and Arg-56. Residues Asp-71 and 132 to 139 (CGNPFFTT) contribute to the UMP site. ATP contacts are provided by Thr-159, Tyr-165, and Asp-168.

Belongs to the UMP kinase family. In terms of assembly, homohexamer.

Its subcellular location is the cytoplasm. The catalysed reaction is UMP + ATP = UDP + ADP. It participates in pyrimidine metabolism; CTP biosynthesis via de novo pathway; UDP from UMP (UMPK route): step 1/1. Its activity is regulated as follows. Inhibited by UTP. In terms of biological role, catalyzes the reversible phosphorylation of UMP to UDP. The protein is Uridylate kinase of Prochlorococcus marinus (strain AS9601).